A 199-amino-acid polypeptide reads, in one-letter code: Prolactin (199 aa).

C4 and C11 are oxidised to a cystine. S26, S34, and S90 each carry phosphoserine. 2 disulfide bridges follow: C58-C174 and C191-C199.

The protein belongs to the somatotropin/prolactin family. As to quaternary structure, interacts with PRLR.

The protein localises to the secreted. Prolactin acts primarily on the mammary gland by promoting lactation. This is Prolactin (PRL) from Balaenoptera borealis (Sei whale).